The sequence spans 560 residues: MPDAAVKYRAYPQVNIPDRTWPTKTITKAPVWCSVDLRDGNQALVDPMGHDRKARMFHLLIEMGFKEIEIGFPSASQTDFDFARWCVEEGNVPDDVSLQVLVQCRPELITRTFEALEGANRPIVHFYNSTSELQRRVVFAKDVQGIKQIAVDAAKMITDMATKAGGGYRFEYSPESFTGTELDVALEICNAVIEVVKPTPDNKLIINLPSTVEMATPNVYADQIEWMCRNLDNRENLIVSLHPHNDRGTGIAAAELALLAGADRVEGTLFGNGERTGNVDMVTMALNMFTQGVDPEIDCSNIERIKEVFEYSNQMAIGERHPYVGELVYTAFSGSHQDAINKGMKAAQVANHPVWEVPYLPIDPRDVGRSYEAIIRINSQSGKGGIAYILQQDYGLNLPRNLQVEFREDIQRITDVEGKELPSRRIYDRFIERYVTQPEGRLRFVDHHTYPDTEHKGQRIVAAEITDNGEIKRIEGRGNGPIDGFINALSHYLGIEMSVEDYSEHSLQHGSNAAAISYVETSYPGGKLFGAGINTNIVAASLEAIVSAANRVLDVKAGKA.

Residues 30-303 enclose the Pyruvate carboxyltransferase domain; it reads PVWCSVDLRD…DPEIDCSNIE (274 aa). Mg(2+) contacts are provided by Asp39, His242, His244, and Asn278. The tract at residues 437 to 560 is regulatory domain; sequence QPEGRLRFVD…RVLDVKAGKA (124 aa).

Belongs to the alpha-IPM synthase/homocitrate synthase family. LeuA type 2 subfamily. As to quaternary structure, homodimer. Requires Mg(2+) as cofactor.

It is found in the cytoplasm. It carries out the reaction 3-methyl-2-oxobutanoate + acetyl-CoA + H2O = (2S)-2-isopropylmalate + CoA + H(+). It participates in amino-acid biosynthesis; L-leucine biosynthesis; L-leucine from 3-methyl-2-oxobutanoate: step 1/4. In terms of biological role, catalyzes the condensation of the acetyl group of acetyl-CoA with 3-methyl-2-oxobutanoate (2-ketoisovalerate) to form 3-carboxy-3-hydroxy-4-methylpentanoate (2-isopropylmalate). This chain is 2-isopropylmalate synthase, found in Rhizobium johnstonii (strain DSM 114642 / LMG 32736 / 3841) (Rhizobium leguminosarum bv. viciae).